The primary structure comprises 160 residues: Probable chemoreceptor glutamine deamidase CheD 2 (160 aa).

The protein belongs to the CheD family.

The enzyme catalyses L-glutaminyl-[protein] + H2O = L-glutamyl-[protein] + NH4(+). In terms of biological role, probably deamidates glutamine residues to glutamate on methyl-accepting chemotaxis receptors (MCPs), playing an important role in chemotaxis. The protein is Probable chemoreceptor glutamine deamidase CheD 2 of Geobacter sulfurreducens (strain ATCC 51573 / DSM 12127 / PCA).